The chain runs to 181 residues: Crossover junction endodeoxyribonuclease RuvC (181 aa).

Residues Asp7, Glu67, and Asp139 contribute to the active site. Positions 7, 67, and 139 each coordinate Mg(2+).

Belongs to the RuvC family. Homodimer which binds Holliday junction (HJ) DNA. The HJ becomes 2-fold symmetrical on binding to RuvC with unstacked arms; it has a different conformation from HJ DNA in complex with RuvA. In the full resolvosome a probable DNA-RuvA(4)-RuvB(12)-RuvC(2) complex forms which resolves the HJ. Mg(2+) is required as a cofactor.

It localises to the cytoplasm. The catalysed reaction is Endonucleolytic cleavage at a junction such as a reciprocal single-stranded crossover between two homologous DNA duplexes (Holliday junction).. In terms of biological role, the RuvA-RuvB-RuvC complex processes Holliday junction (HJ) DNA during genetic recombination and DNA repair. Endonuclease that resolves HJ intermediates. Cleaves cruciform DNA by making single-stranded nicks across the HJ at symmetrical positions within the homologous arms, yielding a 5'-phosphate and a 3'-hydroxyl group; requires a central core of homology in the junction. The consensus cleavage sequence is 5'-(A/T)TT(C/G)-3'. Cleavage occurs on the 3'-side of the TT dinucleotide at the point of strand exchange. HJ branch migration catalyzed by RuvA-RuvB allows RuvC to scan DNA until it finds its consensus sequence, where it cleaves and resolves the cruciform DNA. The protein is Crossover junction endodeoxyribonuclease RuvC of Ralstonia pickettii (strain 12J).